A 227-amino-acid chain; its full sequence is GFP-like non-fluorescent chromoprotein (227 aa).

Positions 63 to 65 form a cross-link, 2-iminomethyl-5-imidazolinone (Glu-Gly); that stretch reads EYG. Position 64 is a 2,3-didehydrotyrosine (Tyr-64).

It belongs to the GFP family. Homotetramer. Contains a chromophore consisting of modified amino acid residues. The chromophore is formed by autocatalytic backbone condensation between Xaa-N and Gly-(N+2), oxidation of Tyr-(N+1) to didehydrotyrosine, and formation of a double bond to the alpha-amino nitrogen of residue Xaa-N. Maturation of the chromophore requires nothing other than molecular oxygen. The precise stereochemistry of the tyrosine has not been determined.

Non-fluorescent pigment protein that is lilac in color. This Radianthus crispa (Leathery sea anemone) protein is GFP-like non-fluorescent chromoprotein.